We begin with the raw amino-acid sequence, 116 residues long: Probable early E4 11 kDa protein (116 aa).

The polypeptide is Probable early E4 11 kDa protein (Human adenovirus A serotype 12 (HAdV-12)).